We begin with the raw amino-acid sequence, 700 residues long: Mei4-dependent protein 6 (700 aa).

Kelch repeat units follow at residues 276–322, 327–381, 390–439, 452–499, 508–558, and 569–619; these read CIYL…MVID, KLYL…FDHG, IVYV…KIER, KLYI…FCQR, RIFT…SRFG, and IIYL…RFHE.

This Schizosaccharomyces pombe (strain 972 / ATCC 24843) (Fission yeast) protein is Mei4-dependent protein 6 (mde6).